Here is a 315-residue protein sequence, read N- to C-terminus: Diacylglycerol kinase (315 aa).

The DAGKc domain maps to 1-132; sequence MRKRARIIYN…VDIGKMNNRY (132 aa). ATP-binding positions include 10 to 14, T41, 67 to 73, and T94; these read NPTSG and GDGTLNE. Positions 213, 216, and 218 each coordinate Mg(2+). Catalysis depends on E273, which acts as the Proton acceptor.

The protein belongs to the diacylglycerol/lipid kinase family. Homodimer. Mg(2+) serves as cofactor.

The catalysed reaction is a 1,2-diacyl-sn-glycerol + ATP = a 1,2-diacyl-sn-glycero-3-phosphate + ADP + H(+). Its function is as follows. Catalyzes the phosphorylation of diacylglycerol (DAG) into phosphatidic acid. Is a key enzyme involved in the production of lipoteichoic acid by reintroducing DAG formed from the breakdown of membrane phospholipids into the phosphatidylglycerol biosynthetic pathway. In Staphylococcus aureus (strain USA300 / TCH1516), this protein is Diacylglycerol kinase (dagK).